The sequence spans 48 residues: Large ribosomal subunit protein eL40 (48 aa).

It belongs to the eukaryotic ribosomal protein eL40 family.

This chain is Large ribosomal subunit protein eL40, found in Methanoculleus marisnigri (strain ATCC 35101 / DSM 1498 / JR1).